Here is a 313-residue protein sequence, read N- to C-terminus: uncharacterized protein (313 aa).

This is an uncharacterized protein from Treponema pallidum (strain Nichols).